Here is a 358-residue protein sequence, read N- to C-terminus: Molybdenum import ATP-binding protein ModC 2 (358 aa).

The 234-residue stretch at 1–234 (MPEQGIEAQL…PRLPLNHPDE (234 aa)) folds into the ABC transporter domain. Residue 35–42 (GRSGSGKT) coordinates ATP. The 66-residue stretch at 293-358 (NSSILNILRV…AQIKSVALME (66 aa)) folds into the Mop domain.

Belongs to the ABC transporter superfamily. Molybdate importer (TC 3.A.1.8) family. In terms of assembly, the complex is composed of two ATP-binding proteins (ModC), two transmembrane proteins (ModB) and a solute-binding protein (ModA).

The protein localises to the cell inner membrane. It carries out the reaction molybdate(out) + ATP + H2O = molybdate(in) + ADP + phosphate + H(+). In terms of biological role, part of the ABC transporter complex ModABC involved in molybdenum import. Responsible for energy coupling to the transport system. The protein is Molybdenum import ATP-binding protein ModC 2 of Azotobacter vinelandii.